Here is a 372-residue protein sequence, read N- to C-terminus: Formylglycine-generating enzyme (372 aa).

Positions 1–31 (MAAPAREPALRCCIRLARVFLLLVLACEVAG) are cleaved as a signal peptide. Cys48 and Cys50 are oxidised to a cystine. The interval 61-80 (SSAAAQRYSREANAPGLTSG) is disordered. Glu128 is a Ca(2+) binding site. Asn139 carries N-linked (GlcNAc...) asparagine glycosylation. 2 disulfides stabilise this stretch: Cys216–Cys363 and Cys233–Cys344. 7 residues coordinate Ca(2+): Asn257, Ile258, Asp271, Phe273, Asn291, Gly294, and Glu298. Cu(2+)-binding residues include Cys334 and Cys339. An interaction with sulfatases region spans residues 339–358 (CYRYRCAARSQNTPDSSASN).

It belongs to the sulfatase-modifying factor family. As to quaternary structure, monomer, homodimer and heterodimer with SUMF2. Cu(2+) serves as cofactor. In terms of processing, N-glycosylated. Contains high-mannose-type oligosaccharides.

It is found in the endoplasmic reticulum lumen. It carries out the reaction L-cysteinyl-[sulfatase] + 2 a thiol + O2 = an organic disulfide + 3-oxo-L-alanyl-[sulfatase] + hydrogen sulfide + H2O + H(+). The protein operates within protein modification; sulfatase oxidation. Oxidase that catalyzes the conversion of cysteine to 3-oxoalanine on target proteins, using molecular oxygen and an unidentified reducing agent. 3-oxoalanine modification, which is also named formylglycine (fGly), occurs in the maturation of arylsulfatases and some alkaline phosphatases that use the hydrated form of 3-oxoalanine as a catalytic nucleophile. Known substrates include GALNS, ARSA, STS and ARSE. This is Formylglycine-generating enzyme from Mus musculus (Mouse).